The sequence spans 400 residues: NADH dehydrogenase-like protein MT1860 (400 aa).

This sequence belongs to the NADH dehydrogenase family. FAD is required as a cofactor.

In Mycobacterium tuberculosis (strain CDC 1551 / Oshkosh), this protein is NADH dehydrogenase-like protein MT1860.